The following is a 717-amino-acid chain: Catalase-peroxidase (717 aa).

The N-terminal stretch at 1–12 (MTSKGMCPVAHG) is a signal peptide. Positions 93-221 (WHSAGSYRIA…LAAVMMGLIY (129 aa)) form a cross-link, tryptophyl-tyrosyl-methioninium (Trp-Tyr) (with M-247). The active-site Proton acceptor is His94. Positions 221–247 (YVNPEGVDGKPDPLKTAQDMRVTFARM) form a cross-link, tryptophyl-tyrosyl-methioninium (Tyr-Met) (with W-93). His262 contributes to the heme b binding site.

It belongs to the peroxidase family. Peroxidase/catalase subfamily. Homodimer or homotetramer. Heme b serves as cofactor. In terms of processing, formation of the three residue Trp-Tyr-Met cross-link is important for the catalase, but not the peroxidase activity of the enzyme.

The catalysed reaction is H2O2 + AH2 = A + 2 H2O. It catalyses the reaction 2 H2O2 = O2 + 2 H2O. In terms of biological role, bifunctional enzyme with both catalase and broad-spectrum peroxidase activity. This chain is Catalase-peroxidase, found in Polynucleobacter asymbioticus (strain DSM 18221 / CIP 109841 / QLW-P1DMWA-1) (Polynucleobacter necessarius subsp. asymbioticus).